Here is a 1454-residue protein sequence, read N- to C-terminus: ABC transporter G family member 39 (1454 aa).

Residues 175 to 448 (LGFFHLLPSK…FEYFGFQCPE (274 aa)) form the ABC transporter 1 domain. 208-215 (GPPSSGKT) provides a ligand contact to ATP. An ABC transmembrane type-2 1 domain is found at 526-739 (ELFKACFDRE…GQTAIVMNEF (214 aa)). 7 helical membrane passes run 544–564 (FVYV…MTVY), 584–604 (MFFS…FTVM), 623–643 (FALP…GIWI), 663–683 (LLAY…LGAI), 689–709 (ISNS…GFII), 716–736 (PWMT…AIVM), and 775–795 (FWIC…FYIL). Residues 812 to 824 (EEGKDKQKGENRG) show a composition bias toward basic and acidic residues. The disordered stretch occupies residues 812–838 (EEGKDKQKGENRGTEGSVVELNSSSNK). An ABC transporter 2 domain is found at 853-1106 (LAFNNVNYYV…LVEYFEAVEG (254 aa)). Position 898-905 (898-905 (GVSGAGKT)) interacts with ATP. Positions 1178-1392 (TQTKACFWKQ…TLYGLITSQV (215 aa)) constitute an ABC transmembrane type-2 2 domain. The next 7 membrane-spanning stretches (helical) occupy residues 1199 to 1219 (AIRF…FWQI), 1231 to 1251 (NFFG…AATV), 1285 to 1303 (IMYN…YSMI), 1312 to 1332 (FLWF…YGMM), 1342 to 1362 (IAGI…GFLI), 1367 to 1387 (IPIW…LYGL), and 1423 to 1443 (FLPV…FVFA).

It belongs to the ABC transporter superfamily. ABCG family. PDR (TC 3.A.1.205) subfamily.

The protein localises to the membrane. In terms of biological role, may be a general defense protein. The protein is ABC transporter G family member 39 (ABCG39) of Arabidopsis thaliana (Mouse-ear cress).